Reading from the N-terminus, the 110-residue chain is U-scoloptoxin(16)-Er6a (110 aa).

An N-terminal signal peptide occupies residues 1–26 (MTSTRKLSVSCLIVFMVSSLIAVSSG).

Belongs to the scoloptoxin-16 family. Post-translationally, contains 4 disulfide bonds. Expressed by the venom gland.

It is found in the secreted. The sequence is that of U-scoloptoxin(16)-Er6a from Ethmostigmus rubripes (Giant centipede).